The sequence spans 248 residues: NH(3)-dependent NAD(+) synthetase (248 aa).

31-38 (GVSGGVDS) is a binding site for ATP. Asp37 is a Mg(2+) binding site. Arg114 contributes to the deamido-NAD(+) binding site. Residue Thr134 participates in ATP binding. Glu139 serves as a coordination point for Mg(2+). Deamido-NAD(+)-binding residues include Lys147 and Asp154. Residues Lys163 and Ser185 each coordinate ATP. 236–237 (HK) serves as a coordination point for deamido-NAD(+).

It belongs to the NAD synthetase family. In terms of assembly, homodimer.

It catalyses the reaction deamido-NAD(+) + NH4(+) + ATP = AMP + diphosphate + NAD(+) + H(+). Its pathway is cofactor biosynthesis; NAD(+) biosynthesis; NAD(+) from deamido-NAD(+) (ammonia route): step 1/1. Catalyzes the ATP-dependent amidation of deamido-NAD to form NAD. Uses ammonia as a nitrogen source. The protein is NH(3)-dependent NAD(+) synthetase of Methanoregula boonei (strain DSM 21154 / JCM 14090 / 6A8).